We begin with the raw amino-acid sequence, 107 residues long: Insulin-like peptide 6 (107 aa).

The N-terminal stretch at 1 to 33 is a signal peptide; sequence MVLKVPTSKVLLVLATLFAVAAMISSWMPQVAA. Disulfide bonds link C48–C91, C60–C105, and C90–C96. Positions 67–76 are cleaved as a propeptide — connecting peptide; that stretch reads LGDVFPNSFG.

The protein belongs to the insulin family. As to quaternary structure, heterodimer of a B chain and an A chain linked by two disulfide bonds. Expressed at a low level in the larval gut.

It is found in the secreted. In terms of biological role, possible ligand of InR/insulin-like receptor. This Drosophila melanogaster (Fruit fly) protein is Insulin-like peptide 6.